A 223-amino-acid chain; its full sequence is Small ribosomal subunit protein uS3 (223 aa).

The KH type-2 domain maps to 38-106 (IREFIAKQLT…RVHINIVEIK (69 aa)).

It belongs to the universal ribosomal protein uS3 family. In terms of assembly, part of the 30S ribosomal subunit. Forms a tight complex with proteins S10 and S14.

Functionally, binds the lower part of the 30S subunit head. Binds mRNA in the 70S ribosome, positioning it for translation. In Pediococcus pentosaceus (strain ATCC 25745 / CCUG 21536 / LMG 10740 / 183-1w), this protein is Small ribosomal subunit protein uS3.